An 89-amino-acid chain; its full sequence is UPF0223 protein BCA_4066 (89 aa).

It belongs to the UPF0223 family.

This chain is UPF0223 protein BCA_4066, found in Bacillus cereus (strain 03BB102).